The chain runs to 430 residues: Acylsugar acyltransferase 3 (430 aa).

Catalysis depends on proton acceptor residues His155 and Asp367.

The protein belongs to the plant acyltransferase family. In terms of assembly, monomer. In terms of tissue distribution, expressed in tip cells of type I trichomes of stems and petioles, sites of acylsugars production.

Functionally, catalyzes the transfer of short (four to five carbons) branched acyl chains to the furanose ring of di-acylsucrose acceptors to produce tri-acylsucroses such as S3:15 (5,5,5), S4:17 (2,5,5,5) and S4:24 (2,5,5,12) acylsucroses. The chain is Acylsugar acyltransferase 3 from Solanum lycopersicum (Tomato).